The primary structure comprises 233 residues: uncharacterized protein (233 aa).

Zn(2+) contacts are provided by H64, H66, D68, H69, H143, D162, and H212.

It belongs to the metallo-beta-lactamase superfamily. Glyoxalase II family. It depends on Zn(2+) as a cofactor.

This is an uncharacterized protein from Bacillus subtilis (strain 168).